Consider the following 732-residue polypeptide: Prolyl tripeptidyl peptidase (732 aa).

An N-terminal signal peptide occupies residues 1–24 (MKKTIFQQLFLSVCALTVALPCSA). Catalysis depends on charge relay system residues Ser603, Asp678, and His710.

It belongs to the peptidase S9B family. The N-terminus is blocked.

The enzyme catalyses Hydrolysis of Xaa-Xaa-Pro-|-Yaa- releasing the N-terminal tripeptide of a peptide with Pro as the third residue (position P1) and where Yaa is not proline.. With respect to regulation, strongly inhibited by diisopropyl fluorophosphate and Pefabloc. Weakly inhibited by 3,4-dichloroisocumarin. Not inhibited by phenylmethylsulfonyl fluoride, leupeptin, antipain or prolinal. Activated by iodoacetamide. Functionally, serine proteinase. Releases tripeptides from the free amino terminus of proteins. Has a requirement for Pro in the P1 position, but is inactivated by Pro in the P1' position. This chain is Prolyl tripeptidyl peptidase, found in Porphyromonas gingivalis (strain ATCC BAA-308 / W83).